The chain runs to 203 residues: CASP-like protein 2U6 (203 aa).

The Cytoplasmic segment spans residues 1–31 (MSEHRIPVAADKKISPPISAGEQKGCKGLKR). A helical membrane pass occupies residues 32-52 (TDLMLRFAAFVCCTVTMVVLI). At 53-84 (TDKQTSAIQVPGFNNLTITKTVSFDLAKAFVY) the chain is on the extracellular side. Residue asparagine 67 is glycosylated (N-linked (GlcNAc...) asparagine). The helical transmembrane segment at 85-105 (LVSAAGIGAGYTLLVLVLSII) threads the bilayer. Topologically, residues 106 to 111 (SAERSK) are cytoplasmic. The chain crosses the membrane as a helical span at residues 112–132 (AIAWFIFVFDQLITYVLLAAA). Topologically, residues 133 to 164 (AASTEVAYMGAHAPPEASWLKVCSLFGRFCHQ) are extracellular. Residues 165-185 (LGASLVTSLISTVLFAFSAAI) form a helical membrane-spanning segment. Residues 186–203 (SAYYLFSNTNVRPAYSKG) are Cytoplasmic-facing.

Belongs to the Casparian strip membrane proteins (CASP) family. In terms of assembly, homodimer and heterodimers.

Its subcellular location is the cell membrane. In Selaginella moellendorffii (Spikemoss), this protein is CASP-like protein 2U6.